A 700-amino-acid polypeptide reads, in one-letter code: Tectonic-2 (700 aa).

Positions 1–25 are cleaved as a signal peptide; that stretch reads MGSLSPLSLLWGLLLLQGVLRPLRG. Residues 26 to 665 lie on the Extracellular side of the membrane; the sequence is DPVFIPPFIR…YYQGEPQSQC (640 aa). N-linked (GlcNAc...) asparagine glycosylation is found at Asn76, Asn82, Asn146, Asn156, and Asn389. A helical transmembrane segment spans residues 666 to 682; the sequence is VAKGLMLLSLLMLAILL. Residues 683-700 lie on the Cytoplasmic side of the membrane; sequence RHPWVRMCKARDSAAIYH.

It belongs to the tectonic family. In terms of assembly, part of the tectonic-like complex (also named B9 complex). As to expression, significant expression is observed in brain, kidney and eye.

It is found in the membrane. Its subcellular location is the cytoplasm. The protein localises to the cytoskeleton. The protein resides in the cilium basal body. Functionally, component of the tectonic-like complex, a complex localized at the transition zone of primary cilia and acting as a barrier that prevents diffusion of transmembrane proteins between the cilia and plasma membranes. Required for hedgehog signaling transduction. The polypeptide is Tectonic-2 (Tctn2) (Mus musculus (Mouse)).